We begin with the raw amino-acid sequence, 162 residues long: Phosphopantetheine adenylyltransferase (162 aa).

Ser11 lines the substrate pocket. ATP contacts are provided by residues 11–12 and His19; that span reads SF. Substrate contacts are provided by Lys43, Val76, and Arg90. ATP-binding positions include 91-93, Glu101, and 126-132; these read GLR and HLYISSS.

The protein belongs to the bacterial CoaD family. In terms of assembly, homohexamer. Requires Mg(2+) as cofactor.

Its subcellular location is the cytoplasm. The enzyme catalyses (R)-4'-phosphopantetheine + ATP + H(+) = 3'-dephospho-CoA + diphosphate. It functions in the pathway cofactor biosynthesis; coenzyme A biosynthesis; CoA from (R)-pantothenate: step 4/5. Functionally, reversibly transfers an adenylyl group from ATP to 4'-phosphopantetheine, yielding dephospho-CoA (dPCoA) and pyrophosphate. The chain is Phosphopantetheine adenylyltransferase from Streptococcus pneumoniae (strain Taiwan19F-14).